The chain runs to 330 residues: ADP-L-glycero-D-manno-heptose-6-epimerase (330 aa).

NADP(+) is bound by residues 11–12 (FI), 32–33 (DN), K39, K54, 75–79 (EGACS), and N92. Y139 (proton acceptor) is an active-site residue. Position 143 (K143) interacts with NADP(+). N168 provides a ligand contact to substrate. NADP(+) contacts are provided by V169 and K177. K177 (proton acceptor) is an active-site residue. Residues R179, H186, 200–203 (FGEY), R213, and Y292 each bind substrate.

The protein belongs to the NAD(P)-dependent epimerase/dehydratase family. HldD subfamily. Homopentamer. NADP(+) serves as cofactor.

The enzyme catalyses ADP-D-glycero-beta-D-manno-heptose = ADP-L-glycero-beta-D-manno-heptose. It functions in the pathway nucleotide-sugar biosynthesis; ADP-L-glycero-beta-D-manno-heptose biosynthesis; ADP-L-glycero-beta-D-manno-heptose from D-glycero-beta-D-manno-heptose 7-phosphate: step 4/4. In terms of biological role, catalyzes the interconversion between ADP-D-glycero-beta-D-manno-heptose and ADP-L-glycero-beta-D-manno-heptose via an epimerization at carbon 6 of the heptose. The chain is ADP-L-glycero-D-manno-heptose-6-epimerase from Burkholderia ambifaria (strain MC40-6).